The sequence spans 562 residues: Vacuolar basic amino acid transporter 1 (562 aa).

Topologically, residues Met1–Asn30 are vacuolar. The chain crosses the membrane as a helical span at residues Leu31–Leu51. Residues Asp52 to Arg100 lie on the Cytoplasmic side of the membrane. Residues Lys101–Ala121 form a helical membrane-spanning segment. The Vacuolar segment spans residues Arg122 to Arg131. Residue Asn123 is glycosylated (N-linked (GlcNAc...) asparagine). Residues Ala132–Ile152 form a helical membrane-spanning segment. Over Cys153 to Asn166 the chain is Cytoplasmic. A helical membrane pass occupies residues Ile167–Ile187. Over Gly188 to Arg190 the chain is Vacuolar. Residues Ala191–Ile211 traverse the membrane as a helical segment. Residues Asn212–Arg232 are Cytoplasmic-facing. The helical transmembrane segment at Ile233–Ser253 threads the bilayer. Topologically, residues Ser254 to Gln255 are vacuolar. A helical transmembrane segment spans residues Leu256–Glu276. Residues Arg277 to Arg292 are Cytoplasmic-facing. A helical membrane pass occupies residues Ser293–Phe313. Topologically, residues Arg314–Gly331 are vacuolar. Asn324 carries N-linked (GlcNAc...) asparagine glycosylation. The chain crosses the membrane as a helical span at residues Leu332–Leu352. Residues Arg353–Gln365 are Cytoplasmic-facing. Residues Ile366–Ser386 traverse the membrane as a helical segment. Residues His387–Val419 lie on the Vacuolar side of the membrane. A helical transmembrane segment spans residues Leu420–Val440. Topologically, residues Glu441–Met448 are cytoplasmic. A helical transmembrane segment spans residues Thr449 to Val469. Residues Ser470–Lys528 lie on the Vacuolar side of the membrane. Asn504 carries N-linked (GlcNAc...) asparagine glycosylation. Residues Ala529–Leu549 form a helical membrane-spanning segment. Topologically, residues Tyr550–Ser562 are cytoplasmic.

This sequence belongs to the major facilitator superfamily.

It localises to the vacuole membrane. Its function is as follows. Transporter required for vacuolar uptake of at least histidine and lysine. This Saccharomyces cerevisiae (strain ATCC 204508 / S288c) (Baker's yeast) protein is Vacuolar basic amino acid transporter 1 (VBA1).